Consider the following 259-residue polypeptide: Small ribosomal subunit protein eS1 (259 aa).

This sequence belongs to the eukaryotic ribosomal protein eS1 family. In terms of assembly, component of the small ribosomal subunit. Mature ribosomes consist of a small (40S) and a large (60S) subunit. The 40S subunit contains about 33 different proteins and 1 molecule of RNA (18S). The 60S subunit contains about 49 different proteins and 3 molecules of RNA (25S, 5.8S and 5S).

Its subcellular location is the cytoplasm. In Monosiga brevicollis (Choanoflagellate), this protein is Small ribosomal subunit protein eS1.